The primary structure comprises 144 residues: Large ribosomal subunit protein uL15 (144 aa).

Residues 1–51 (MKLNELKPATGSRSKRLRKGRGLSSGHGFTSGRGTKGQKAHGKTRLGFEGG) are disordered. Positions 23-35 (LSSGHGFTSGRGT) are enriched in gly residues.

The protein belongs to the universal ribosomal protein uL15 family. In terms of assembly, part of the 50S ribosomal subunit.

In terms of biological role, binds to the 23S rRNA. In Limosilactobacillus reuteri (strain DSM 20016) (Lactobacillus reuteri), this protein is Large ribosomal subunit protein uL15.